The following is a 217-amino-acid chain: Probable nicotinate-nucleotide adenylyltransferase (217 aa).

This sequence belongs to the NadD family.

The enzyme catalyses nicotinate beta-D-ribonucleotide + ATP + H(+) = deamido-NAD(+) + diphosphate. Its pathway is cofactor biosynthesis; NAD(+) biosynthesis; deamido-NAD(+) from nicotinate D-ribonucleotide: step 1/1. Functionally, catalyzes the reversible adenylation of nicotinate mononucleotide (NaMN) to nicotinic acid adenine dinucleotide (NaAD). The chain is Probable nicotinate-nucleotide adenylyltransferase from Moorella thermoacetica (strain ATCC 39073 / JCM 9320).